A 261-amino-acid polypeptide reads, in one-letter code: Eukaryotic translation initiation factor 3 subunit J-A (261 aa).

Residues 1 to 11 (MAAAAAAAAAA) show a composition bias toward low complexity. The interval 1–113 (MAAAAAAAAA…EPEESKVLTP (113 aa)) is disordered. Residues 4–72 (AAAAAAAAGD…KEEAEVKPEV (69 aa)) form a sufficient for interaction with EIF3B region. Phosphoserine occurs at positions 14, 16, and 23. Acidic residues predominate over residues 43–64 (EGEDEDEDVKDNWDDDDDENKE). Residues 65–109 (EAEVKPEVKISEKKKIAEKIKEKERQQKKRQEEIKKRLEEPEESK) show a composition bias toward basic and acidic residues. Residues 73–138 (KISEKKKIAE…ESDLELAKET (66 aa)) adopt a coiled-coil conformation. K109 is covalently cross-linked (Glycyl lysine isopeptide (Lys-Gly) (interchain with G-Cter in SUMO2)). Residue T112 is modified to Phosphothreonine. The residue at position 130 (S130) is a Phosphoserine. The tract at residues 246 to 261 (YGGYEGGYVQDYEDFM) is promotes stable association with the 40S ribosome. Y257 is subject to Phosphotyrosine.

Belongs to the eIF-3 subunit J family. In terms of assembly, component of the eukaryotic translation initiation factor 3 (eIF-3) complex, which is composed of 13 subunits: EIF3A, EIF3B, EIF3C, EIF3D, EIF3E, EIF3F, EIF3G, EIF3H, EIF3I, EIF3J, EIF3K, EIF3L and EIF3M. The eIF-3 complex appears to include 3 stable modules: module A is composed of EIF3A, EIF3B, EIF3G and EIF3I; module B is composed of EIF3F, EIF3H, and EIF3M; and module C is composed of EIF3C, EIF3D, EIF3E, EIF3K and EIF3L. EIF3C of module C binds EIF3B of module A and EIF3H of module B, thereby linking the three modules. EIF3J is a labile subunit that binds to the eIF-3 complex via EIF3B. The eIF-3 complex interacts with RPS6KB1 under conditions of nutrient depletion. Mitogenic stimulation leads to binding and activation of a complex composed of MTOR and RPTOR, leading to phosphorylation and release of RPS6KB1 and binding of EIF4B to eIF-3. Post-translationally, phosphorylated. Phosphorylation is enhanced upon serum stimulation.

It localises to the cytoplasm. Functionally, component of the eukaryotic translation initiation factor 3 (eIF-3) complex, which is required for several steps in the initiation of protein synthesis. The eIF-3 complex associates with the 40S ribosome and facilitates the recruitment of eIF-1, eIF-1A, eIF-2:GTP:methionyl-tRNAi and eIF-5 to form the 43S pre-initiation complex (43S PIC). The eIF-3 complex stimulates mRNA recruitment to the 43S PIC and scanning of the mRNA for AUG recognition. The eIF-3 complex is also required for disassembly and recycling of post-termination ribosomal complexes and subsequently prevents premature joining of the 40S and 60S ribosomal subunits prior to initiation. The eIF-3 complex specifically targets and initiates translation of a subset of mRNAs involved in cell proliferation, including cell cycling, differentiation and apoptosis, and uses different modes of RNA stem-loop binding to exert either translational activation or repression. This subunit binds directly within the mRNA entry channel of the 40S ribosome to the aminoacyl (A) site. It may regulate the interaction between the 43S PIC and mRNA. This is Eukaryotic translation initiation factor 3 subunit J-A (Eif3j1) from Mus musculus (Mouse).